A 406-amino-acid chain; its full sequence is MNAPSRPNDYAAYPDLKGRFGDYGGQYVPETLMPLVHELTAAYEAAKADPAFQAELAGYLTHYVGRPSPLYFAERLTRHYGGAKIYLKREELNHTGSHKINNCMGQILLAQRMGKTRIIAETGAGQHGVATATVCARFGLPCVVYMGAVDVERQKPNVFRMNLLGAEVRPVTSGSATLKDAMNEALRDWVTNVHDTYYLIGSAAGMHPYPMMVRDFQAVIGRETREQILELEGRLPDALVACVGGGSNAIGLFHPFLNDSSVKIFGVEAAGEGVETGRHAAAINGGRPGVLHGNMTYLLQDRVGQIEEAHSISAGLDYPGIGPEHAWLHDVGRATYLTATDTEALEAFRLLSELEGILPAIESSHALARLPEITREVGKDGIVVLNLSGRGDKDVNTVASYLGRQI.

Lys99 carries the N6-(pyridoxal phosphate)lysine modification.

It belongs to the TrpB family. Tetramer of two alpha and two beta chains. Pyridoxal 5'-phosphate is required as a cofactor.

The enzyme catalyses (1S,2R)-1-C-(indol-3-yl)glycerol 3-phosphate + L-serine = D-glyceraldehyde 3-phosphate + L-tryptophan + H2O. It participates in amino-acid biosynthesis; L-tryptophan biosynthesis; L-tryptophan from chorismate: step 5/5. Functionally, the beta subunit is responsible for the synthesis of L-tryptophan from indole and L-serine. This Phenylobacterium zucineum (strain HLK1) protein is Tryptophan synthase beta chain.